The sequence spans 587 residues: MWYQSASLLGVAAVAQAATVHYSLDLTWETGSPNGVSREMIFVNGQFPGPAIILNEGDEAIIDVTNHLPFNTSIHFHGIEQKNTPWADGVVGLSQWAIQPGQSYTYQWRADTYGTYWYHAHDKAEIMDGLYGPVHIRPRPNRDSPFSMISDDPADIRAMKQAERNGKLVMLSDWDHLTGQEYMKAMEETGYDIFCSDSVLINGRGSVFCHDPEELTQMVPPPELAILNSSLTDKGCLPFVPPIQGNWEHHPDKVPPGLNEGCHPSTTQETIFTVDAAHQWASFHFISAASLKVLVVSIDEHPMYVYEVDGRYIEPQLAHSVKLYNGERYSVMVKLDKEPANYKMRAANDGGNQIVSGFATVTYEGGETSQRPSQPYIDYGSRNTSADVIPLDTNHLPPYPAISPASEPDDFHILMLGRTNSSWEWSLDGAAFLPSNLAALPPAILSPQAPEFADALKITTRNDTWVDIVFQLVVSETTPIQPPHPLHKHSNKGFLLGTGHGKFNWTSIKEAKEASPESFLETPVYRDTFTTSPQGETWTAIRYHVENPGPFLLHCHMTTHLQSGMGLILMDGVDVWPEVYADMITPM.

An N-terminal signal peptide occupies residues 1 to 17; sequence MWYQSASLLGVAAVAQA. Plastocyanin-like domains are found at residues 41–137 and 168–350; these read IFVN…VHIR and LVML…ANDG. Asn-71 carries N-linked (GlcNAc...) asparagine glycosylation. 4 residues coordinate Cu cation: His-75, His-77, His-119, and His-121. N-linked (GlcNAc...) asparagine glycosylation is found at Asn-228, Asn-383, Asn-420, and Asn-462. Residues 397–577 form the Plastocyanin-like 3 domain; the sequence is PPYPAISPAS…ILMDGVDVWP (181 aa). His-487 provides a ligand contact to Cu cation. Asn-504 carries an N-linked (GlcNAc...) asparagine glycan.

This sequence belongs to the multicopper oxidase family.

It is found in the cell surface. It functions in the pathway pigment biosynthesis; melanin biosynthesis. Its function is as follows. Laccase; part of the gene cluster that mediates the biosynthesis of dihydroxynaphthalene (DHN)-melanin, a bluish-green pigment and a structural component of the conidial wall. The first step of the pathway is the production of the heptaketide naphtopyrone YWA1 by the polyketide synthase alb1 though condensation of acetyl-CoA with malonyl-CoA. The naphtopyrone YWA1 is then converted to the pentaketide 1,3,6,8-tetrahydroxynaphthalene (1,3,6,8-THN) by the heptaketide hydrolyase ayg1 though chain-length shortening. 1,3,6,8-THN is substrate of the hydroxynaphthalene reductase arp2 to yield scytalone. The scytalone dehydratase arp1 then reduces scytalone to 1,3,8-THN. 1,3,8-THN is also substrate of the hydroxynaphthalene reductase arp2 to yield vermelone. Vermelone is further converted by the multicopper oxidase abr1 to 1,8-DHN. Finally the laccase abr2 transforms 1,8-DHN to DHN-melanin. DHN-melanin biosynthesis appears to be initiated in endosomes where early enzymes (abl1, ayg1, arp1 and arp2) localize, with exocytosis leading to melanin deposition on the cell surface where late enzymes (abr1 and abr2) localize. DHN-melanin is an important structural component of the outer cell wall and is required for the presence of conidial surface hydrophobins. DHN-melanin also plays a crucial role in fungal virulence, including a protective role against the host's immune defenses. DHN-melanin also protects conidia against amoeba predation. This is Laccase abr2 from Aspergillus fumigatus (strain ATCC MYA-4609 / CBS 101355 / FGSC A1100 / Af293) (Neosartorya fumigata).